The sequence spans 1044 residues: Ribonucleoside-diphosphate reductase subunit alpha (1044 aa).

ATP-cone domains lie at 9-111, 118-217, and 235-325; these read YTIV…KAER, IAII…ARAR, and YVVQ…ETLG. Residues threonine 440, 455–456, glycine 484, 668–672, and 855–859 each bind substrate; these read SC, NLCTE, and PTATI. Cysteines 456 and 685 form a disulfide. Asparagine 668 functions as the Proton acceptor in the catalytic mechanism. Residue cysteine 670 is the Cysteine radical intermediate of the active site. Glutamate 672 (proton acceptor) is an active-site residue.

This sequence belongs to the ribonucleoside diphosphate reductase large chain family. Tetramer of two alpha and two beta subunits.

The enzyme catalyses a 2'-deoxyribonucleoside 5'-diphosphate + [thioredoxin]-disulfide + H2O = a ribonucleoside 5'-diphosphate + [thioredoxin]-dithiol. Under complex allosteric control mediated by deoxynucleoside triphosphates and ATP binding. The type of nucleotide bound at the specificity site determines substrate preference. It seems probable that ATP makes the enzyme reduce CDP and UDP, dGTP favors ADP reduction and dTTP favors GDP reduction. In terms of biological role, provides the precursors necessary for DNA synthesis. Catalyzes the biosynthesis of deoxyribonucleotides from the corresponding ribonucleotides. The protein is Ribonucleoside-diphosphate reductase subunit alpha (nrdA) of Chlamydia pneumoniae (Chlamydophila pneumoniae).